The sequence spans 332 residues: Ribose operon repressor (332 aa).

An HTH lacI-type domain is found at 2-56; that stretch reads ATMKDIARLAQVSTSTVSHVINGSRFVSDEIREKVMRIVAELNYTPSAVARSLKV. Positions 4–23 form a DNA-binding region, H-T-H motif; sequence MKDIARLAQVSTSTVSHVIN.

In terms of biological role, transcriptional repressor for the ribose rbsDACBK operon. The sequence is that of Ribose operon repressor (rbsR) from Haemophilus influenzae (strain ATCC 51907 / DSM 11121 / KW20 / Rd).